We begin with the raw amino-acid sequence, 205 residues long: Potassium-transporting ATPase KdpC subunit (205 aa).

A helical transmembrane segment spans residues 7–27 (PAIVILVALTIITGLIYPLAM).

It belongs to the KdpC family. The system is composed of three essential subunits: KdpA, KdpB and KdpC.

The protein resides in the cell inner membrane. Part of the high-affinity ATP-driven potassium transport (or Kdp) system, which catalyzes the hydrolysis of ATP coupled with the electrogenic transport of potassium into the cytoplasm. This subunit acts as a catalytic chaperone that increases the ATP-binding affinity of the ATP-hydrolyzing subunit KdpB by the formation of a transient KdpB/KdpC/ATP ternary complex. In Nitrobacter hamburgensis (strain DSM 10229 / NCIMB 13809 / X14), this protein is Potassium-transporting ATPase KdpC subunit.